Here is a 151-residue protein sequence, read N- to C-terminus: Flagellar assembly factor FliW (151 aa).

Belongs to the FliW family. In terms of assembly, interacts with translational regulator CsrA and flagellin(s).

The protein resides in the cytoplasm. Acts as an anti-CsrA protein, binds CsrA and prevents it from repressing translation of its target genes, one of which is flagellin. Binds to flagellin and participates in the assembly of the flagellum. The protein is Flagellar assembly factor FliW of Halalkalibacterium halodurans (strain ATCC BAA-125 / DSM 18197 / FERM 7344 / JCM 9153 / C-125) (Bacillus halodurans).